A 128-amino-acid chain; its full sequence is Large ribosomal subunit protein bL12 (128 aa).

The protein belongs to the bacterial ribosomal protein bL12 family. In terms of assembly, homodimer. Part of the ribosomal stalk of the 50S ribosomal subunit. Forms a multimeric L10(L12)X complex, where L10 forms an elongated spine to which 2 to 4 L12 dimers bind in a sequential fashion. Binds GTP-bound translation factors.

In terms of biological role, forms part of the ribosomal stalk which helps the ribosome interact with GTP-bound translation factors. Is thus essential for accurate translation. The protein is Large ribosomal subunit protein bL12 of Corynebacterium aurimucosum (strain ATCC 700975 / DSM 44827 / CIP 107346 / CN-1) (Corynebacterium nigricans).